A 284-amino-acid polypeptide reads, in one-letter code: MDSIKKKMMAMKLEKENALEKAINLENQLKEKAKDFEKKEEEMNDWLSKVKNIQTEVDTVQESLQEAISKLEETEKRATNAEAEVAAMTRRIRLLEEDFEQSSGRLTETSTKLDDASKAAEESERNRKTLETRSISDDERMAQLEEQVKEAKYIAEDAERKYDEAARRLAVTEVDLERAESRLETSESKIVELEEELRIVGNNMKSLEVSEQESLQREESYEETIRDLTERLKTAEQRAAEAERQVSKLQNEVDRLEDELLSEKERYRAISGELDTTFAELTSF.

Residues 1–284 (MDSIKKKMMA…DTTFAELTSF (284 aa)) adopt a coiled-coil conformation. Residues 97–140 (EDFEQSSGRLTETSTKLDDASKAAEESERNRKTLETRSISDDER) are disordered. A compositionally biased stretch (polar residues) spans 101–110 (QSSGRLTETS). Residues 111–140 (TKLDDASKAAEESERNRKTLETRSISDDER) show a composition bias toward basic and acidic residues.

The protein belongs to the tropomyosin family. Homodimer.

Functionally, tropomyosin, in association with the troponin complex, plays a central role in the calcium dependent regulation of muscle contraction. This Echinococcus multilocularis (Fox tapeworm) protein is Tropomyosin.